The chain runs to 125 residues: Class III hydrophobin G (125 aa).

The signal sequence occupies residues 1–20 (MKPSIVTFLMLAAVTAAVSA). Disulfide bonds link C54–C107, C60–C101, C61–C94, and C108–C122.

It belongs to the fungal hydrophobin family. In terms of assembly, self-assembles to form functional amyloid fibrils called rodlets. Self-assembly into fibrillar rodlets occurs spontaneously at hydrophobic:hydrophilic interfaces and the rodlets further associate laterally to form amphipathic monolayers.

Its subcellular location is the secreted. The protein resides in the cell wall. Its function is as follows. Aerial growth, conidiation, and dispersal of filamentous fungi in the environment rely upon a capability of their secreting small amphipathic proteins called hydrophobins (HPBs) with low sequence identity. Class I can self-assemble into an outermost layer of rodlet bundles on aerial cell surfaces, conferring cellular hydrophobicity that supports fungal growth, development and dispersal; whereas Class II form highly ordered films at water-air interfaces through intermolecular interactions but contribute nothing to the rodlet structure. RodF and rodG belong to Class III, which contains hydrophobins with intermediate (between classes I and II) or atypical characteristics. RodG, unlike rodA, is not required for rodlet formation. The polypeptide is Class III hydrophobin G (Aspergillus fumigatus (strain ATCC MYA-4609 / CBS 101355 / FGSC A1100 / Af293) (Neosartorya fumigata)).